The following is a 281-amino-acid chain: 2-dehydro-3-deoxyphosphooctonate aldolase (281 aa).

It belongs to the KdsA family.

The protein localises to the cytoplasm. It catalyses the reaction D-arabinose 5-phosphate + phosphoenolpyruvate + H2O = 3-deoxy-alpha-D-manno-2-octulosonate-8-phosphate + phosphate. It participates in carbohydrate biosynthesis; 3-deoxy-D-manno-octulosonate biosynthesis; 3-deoxy-D-manno-octulosonate from D-ribulose 5-phosphate: step 2/3. It functions in the pathway bacterial outer membrane biogenesis; lipopolysaccharide biosynthesis. In Pseudomonas putida (strain GB-1), this protein is 2-dehydro-3-deoxyphosphooctonate aldolase.